Here is a 179-residue protein sequence, read N- to C-terminus: Large ribosomal subunit protein uL6 (179 aa).

It belongs to the universal ribosomal protein uL6 family. As to quaternary structure, part of the 50S ribosomal subunit.

In terms of biological role, this protein binds to the 23S rRNA, and is important in its secondary structure. It is located near the subunit interface in the base of the L7/L12 stalk, and near the tRNA binding site of the peptidyltransferase center. This is Large ribosomal subunit protein uL6 from Spiroplasma kunkelii.